The following is a 564-amino-acid chain: NAD-dependent malic enzyme (564 aa).

Tyr-102 serves as the catalytic Proton donor. Arg-155 contacts NAD(+). Lys-173 (proton acceptor) is an active-site residue. Residues Glu-244, Asp-245, and Asp-268 each coordinate a divalent metal cation. Residues Asp-268 and Asn-417 each contribute to the NAD(+) site.

Belongs to the malic enzymes family. In terms of assembly, homotetramer. It depends on Mg(2+) as a cofactor. Mn(2+) serves as cofactor.

It carries out the reaction (S)-malate + NAD(+) = pyruvate + CO2 + NADH. The catalysed reaction is oxaloacetate + H(+) = pyruvate + CO2. In Pseudomonas aeruginosa (strain ATCC 15692 / DSM 22644 / CIP 104116 / JCM 14847 / LMG 12228 / 1C / PRS 101 / PAO1), this protein is NAD-dependent malic enzyme.